The chain runs to 297 residues: Cyclin-dependent kinase 1 (297 aa).

Met-1 is modified (N-acetylmethionine). Residue Tyr-4 is modified to Phosphotyrosine; by PKR. Residues 4 to 287 (YIKIEKIGEG…GKMALKHPYF (284 aa)) form the Protein kinase domain. N6-acetyllysine; alternate is present on residues Lys-6 and Lys-9. Residues Lys-6 and Lys-9 each participate in a glycyl lysine isopeptide (Lys-Gly) (interchain with G-Cter in SUMO2); alternate cross-link. Residue 10-18 (IGEGTYGVV) coordinates ATP. Thr-14 is modified (phosphothreonine). A Phosphotyrosine; by PKMYT1, WEE1, WEE2 and PKC/PRKCD modification is found at Tyr-15. Tyr-15 carries the phosphotyrosine; by WEE1 and WEE2 modification. Tyr-19 bears the Phosphotyrosine mark. Residue Lys-20 forms a Glycyl lysine isopeptide (Lys-Gly) (interchain with G-Cter in SUMO2) linkage. ATP is bound at residue Lys-33. Phosphoserine is present on Ser-39. Tyr-77 is modified (phosphotyrosine). The Proton acceptor role is filled by Asp-128. A Glycyl lysine isopeptide (Lys-Gly) (interchain with G-Cter in SUMO2) cross-link involves residue Lys-139. Thr-141 bears the Phosphothreonine mark. Thr-161 bears the Phosphothreonine; by CAK mark. Ser-178 carries the phosphoserine modification. Residue Thr-222 is modified to Phosphothreonine. An N6-succinyllysine modification is found at Lys-245. At Ser-248 the chain carries Phosphoserine.

The protein belongs to the protein kinase superfamily. CMGC Ser/Thr protein kinase family. CDC2/CDKX subfamily. As to quaternary structure, forms a stable but non-covalent complex with a regulatory subunit and with a cyclin. Interacts with cyclins-B (CCNB1, CCNB2 and CCNB3) to form a serine/threonine kinase holoenzyme complex also known as maturation promoting factor (MPF). The cyclin subunit imparts substrate specificity to the complex. Can also form CDK1-cylin-D and CDK1-cyclin-E complexes that phosphorylate RB1 in vitro. Binds to RB1 and other transcription factors such as FOXO1 and RUNX2. Promotes G2-M transition when in complex with a cyclin-B. Interacts with DLGAP5. Binds to the CDK inhibitors CDKN1A/p21 and CDKN1B/p27. Isoform 2 is unable to complex with cyclin-B1 and also fails to bind to CDKN1A/p21. Interacts with catalytically active CCNB1 and RALBP1 during mitosis to form an endocytotic complex during interphase. Associates with cyclins-A and B1 during S-phase in regenerating hepatocytes. Interacts with FANCC. Interacts with CEP63; this interaction recruits CDK1 to centrosomes. Interacts with CENPA. Interacts with NR1D1. Interacts with proteasome subunit PSMA8; to participate in meiosis progression during spermatogenesis. Phosphorylation at Thr-161 by CAK/CDK7 activates kinase activity. Phosphorylation at Thr-14 and Tyr-15 by PKMYT1 prevents nuclear translocation. Phosphorylation at Tyr-15 by WEE1 and WEE2 inhibits the protein kinase activity and acts as a negative regulator of entry into mitosis (G2 to M transition). Phosphorylation by PKMYT1 and WEE1 takes place during mitosis to keep CDK1-cyclin-B complexes inactive until the end of G2. By the end of G2, PKMYT1 and WEE1 are inactivated, but CDC25A and CDC25B are activated. Dephosphorylation by active CDC25A and CDC25B at Thr-14 and Tyr-15, leads to CDK1 activation at the G2-M transition. Phosphorylation at Tyr-15 by WEE2 during oogenesis is required to maintain meiotic arrest in oocytes during the germinal vesicle (GV) stage, a long period of quiescence at dictyate prophase I, leading to prevent meiotic reentry. Phosphorylation by WEE2 is also required for metaphase II exit during egg activation to ensure exit from meiosis in oocytes and promote pronuclear formation. Phosphorylated at Tyr-4 by PKR/EIF2AK2 upon genotoxic stress. This phosphorylation triggers CDK1 polyubiquitination and subsequent proteolysis, thus leading to G2 arrest. In response to UV irradiation, phosphorylation at Tyr-15 by PRKCD activates the G2/M DNA damage checkpoint. In terms of processing, polyubiquitinated upon genotoxic stress.

The protein resides in the nucleus. The protein localises to the cytoplasm. It is found in the mitochondrion. Its subcellular location is the cytoskeleton. It localises to the microtubule organizing center. The protein resides in the centrosome. The protein localises to the spindle. The catalysed reaction is L-seryl-[protein] + ATP = O-phospho-L-seryl-[protein] + ADP + H(+). The enzyme catalyses L-threonyl-[protein] + ATP = O-phospho-L-threonyl-[protein] + ADP + H(+). It carries out the reaction [DNA-directed RNA polymerase] + ATP = phospho-[DNA-directed RNA polymerase] + ADP + H(+). Its activity is regulated as follows. Phosphorylation at Thr-14 or Tyr-15 inactivates the enzyme, while phosphorylation at Thr-161 activates it. Activated through a multistep process; binding to cyclin-B is required for relocation of cyclin-kinase complexes to the nucleus, activated by CAK/CDK7-mediated phosphorylation on Thr-161, and CDC25-mediated dephosphorylation of inhibitory phosphorylation on Thr-14 and Tyr-15. Activity is restricted during S-phase in an ATR-dependent manner to prevent premature entry into G2. Repressed by the CDK inhibitors CDKN1A/p21 and CDKN1B/p27 during the G1 phase and by CDKN1A/p21 at the G1-S checkpoint upon DNA damage. Transient activation by rapid and transient dephosphorylation at Tyr-15 triggered by TGFB1. Functionally, plays a key role in the control of the eukaryotic cell cycle by modulating the centrosome cycle as well as mitotic onset; promotes G2-M transition via association with multiple interphase cyclins. Phosphorylates PARVA/actopaxin, APC, AMPH, APC, BARD1, Bcl-xL/BCL2L1, BRCA2, CALD1, CASP8, CDC7, CDC20, CDC25A, CDC25C, CC2D1A, CENPA, CSNK2 proteins/CKII, FZR1/CDH1, CDK7, CEBPB, CHAMP1, DMD/dystrophin, EEF1 proteins/EF-1, EZH2, KIF11/EG5, EGFR, FANCG, FOS, GFAP, GOLGA2/GM130, GRASP1, UBE2A/hHR6A, HIST1H1 proteins/histone H1, HMGA1, HIVEP3/KRC, KAT5, LMNA, LMNB, LBR, MKI67, LATS1, MAP1B, MAP4, MARCKS, MCM2, MCM4, MKLP1, MLST8, MYB, NEFH, NFIC, NPC/nuclear pore complex, PITPNM1/NIR2, NPM1, NCL, NUCKS1, NPM1/numatrin, ORC1, PRKAR2A, EEF1E1/p18, EIF3F/p47, p53/TP53, NONO/p54NRB, PAPOLA, PLEC/plectin, RB1, TPPP, UL40/R2, RAB4A, RAP1GAP, RBBP8/CtIP, RCC1, RPS6KB1/S6K1, KHDRBS1/SAM68, ESPL1, SKI, BIRC5/survivin, STIP1, TEX14, beta-tubulins, MAPT/TAU, NEDD1, VIM/vimentin, TK1, FOXO1, RUNX1/AML1, SAMHD1, SIRT2, CGAS, ZAR1 and RUNX2. CDK1/CDC2-cyclin-B controls pronuclear union in interphase fertilized eggs. Essential for early stages of embryonic development. During G2 and early mitosis, CDC25A/B/C-mediated dephosphorylation activates CDK1/cyclin complexes which phosphorylate several substrates that trigger at least centrosome separation, Golgi dynamics, nuclear envelope breakdown and chromosome condensation. Once chromosomes are condensed and aligned at the metaphase plate, CDK1 activity is switched off by WEE1- and PKMYT1-mediated phosphorylation to allow sister chromatid separation, chromosome decondensation, reformation of the nuclear envelope and cytokinesis. Phosphorylates KRT5 during prometaphase and metaphase. Inactivated by PKR/EIF2AK2- and WEE1-mediated phosphorylation upon DNA damage to stop cell cycle and genome replication at the G2 checkpoint thus facilitating DNA repair. Reactivated after successful DNA repair through WIP1-dependent signaling leading to CDC25A/B/C-mediated dephosphorylation and restoring cell cycle progression. Catalyzes lamin (LMNA, LMNB1 and LMNB2) phosphorylation at the onset of mitosis, promoting nuclear envelope breakdown. In proliferating cells, CDK1-mediated FOXO1 phosphorylation at the G2-M phase represses FOXO1 interaction with 14-3-3 proteins and thereby promotes FOXO1 nuclear accumulation and transcription factor activity, leading to cell death of postmitotic neurons. The phosphorylation of beta-tubulins regulates microtubule dynamics during mitosis. NEDD1 phosphorylation promotes PLK1-mediated NEDD1 phosphorylation and subsequent targeting of the gamma-tubulin ring complex (gTuRC) to the centrosome, an important step for spindle formation. In addition, CC2D1A phosphorylation regulates CC2D1A spindle pole localization and association with SCC1/RAD21 and centriole cohesion during mitosis. The phosphorylation of Bcl-xL/BCL2L1 after prolongated G2 arrest upon DNA damage triggers apoptosis. In contrast, CASP8 phosphorylation during mitosis prevents its activation by proteolysis and subsequent apoptosis. This phosphorylation occurs in cancer cell lines, as well as in primary breast tissues and lymphocytes. EZH2 phosphorylation promotes H3K27me3 maintenance and epigenetic gene silencing. CALD1 phosphorylation promotes Schwann cell migration during peripheral nerve regeneration. CDK1-cyclin-B complex phosphorylates NCKAP5L and mediates its dissociation from centrosomes during mitosis. Regulates the amplitude of the cyclic expression of the core clock gene BMAL1 by phosphorylating its transcriptional repressor NR1D1, and this phosphorylation is necessary for SCF(FBXW7)-mediated ubiquitination and proteasomal degradation of NR1D1. Phosphorylates EML3 at 'Thr-881' which is essential for its interaction with HAUS augmin-like complex and TUBG1. Phosphorylates CGAS during mitosis, leading to its inhibition, thereby preventing CGAS activation by self DNA during mitosis. Phosphorylates SKA3 during mitosis which promotes SKA3 binding to the NDC80 complex and anchoring of the SKA complex to kinetochores, to enable stable attachment of mitotic spindle microtubules to kinetochores. In Mus musculus (Mouse), this protein is Cyclin-dependent kinase 1 (Cdk1).